We begin with the raw amino-acid sequence, 58 residues long: Large ribosomal subunit protein uL30 (58 aa).

This sequence belongs to the universal ribosomal protein uL30 family. As to quaternary structure, part of the 50S ribosomal subunit.

The chain is Large ribosomal subunit protein uL30 from Acinetobacter baumannii (strain AB307-0294).